Consider the following 470-residue polypeptide: UDP-glycosyltransferase 91A1 (470 aa).

UDP-alpha-D-glucose-binding positions include Ser290, 350-352, 367-375, and 389-392; these read VEQ, HPGWGTIIE, and VYDQ.

The protein belongs to the UDP-glycosyltransferase family.

The polypeptide is UDP-glycosyltransferase 91A1 (UGT91A1) (Arabidopsis thaliana (Mouse-ear cress)).